Here is a 227-residue protein sequence, read N- to C-terminus: Small ribosomal subunit protein uS3 (227 aa).

A KH type-2 domain is found at 39 to 109; sequence IHRFFEKLTR…KIVINVDAVD (71 aa).

This sequence belongs to the universal ribosomal protein uS3 family. As to quaternary structure, part of the 30S ribosomal subunit. Forms a tight complex with proteins S10 and S14.

In terms of biological role, binds the lower part of the 30S subunit head. Binds mRNA in the 70S ribosome, positioning it for translation. The chain is Small ribosomal subunit protein uS3 from Mesomycoplasma hyopneumoniae (strain 232) (Mycoplasma hyopneumoniae).